Reading from the N-terminus, the 292-residue chain is 4-diphosphocytidyl-2-C-methyl-D-erythritol kinase (292 aa).

Lysine 10 is an active-site residue. 94–104 is an ATP binding site; the sequence is PVAAGLAGGSS. Residue aspartate 136 is part of the active site.

It belongs to the GHMP kinase family. IspE subfamily.

It catalyses the reaction 4-CDP-2-C-methyl-D-erythritol + ATP = 4-CDP-2-C-methyl-D-erythritol 2-phosphate + ADP + H(+). Its pathway is isoprenoid biosynthesis; isopentenyl diphosphate biosynthesis via DXP pathway; isopentenyl diphosphate from 1-deoxy-D-xylulose 5-phosphate: step 3/6. In terms of biological role, catalyzes the phosphorylation of the position 2 hydroxy group of 4-diphosphocytidyl-2C-methyl-D-erythritol. This is 4-diphosphocytidyl-2-C-methyl-D-erythritol kinase from Brevibacillus brevis (strain 47 / JCM 6285 / NBRC 100599).